The primary structure comprises 203 residues: Putative 3-methyladenine DNA glycosylase (203 aa).

This sequence belongs to the DNA glycosylase MPG family.

The sequence is that of Putative 3-methyladenine DNA glycosylase from Staphylococcus saprophyticus subsp. saprophyticus (strain ATCC 15305 / DSM 20229 / NCIMB 8711 / NCTC 7292 / S-41).